The chain runs to 842 residues: Glycogen phosphorylase, muscle form (842 aa).

Ser2 is modified (N-acetylserine). Residue Ser15 is modified to Phosphoserine; by PHK; in form phosphorylase A. Position 26 is a phosphoserine (Ser26). The AMP site is built by Asp43 and Tyr76. Phosphotyrosine occurs at positions 204 and 227. 310 to 319 (RRFKSSKFGC) is a binding site for AMP. At Ser430 the chain carries Phosphoserine. Position 473 is a phosphotyrosine (Tyr473). A Phosphoserine modification is found at Ser514. Lys681 is subject to N6-(pyridoxal phosphate)lysine. Phosphoserine occurs at positions 747 and 748.

This sequence belongs to the glycogen phosphorylase family. In terms of assembly, homodimer. Homotetramer; to form the enzymatically active phosphorylase A. The cofactor is pyridoxal 5'-phosphate. Post-translationally, phosphorylation of Ser-15 converts phosphorylase B (unphosphorylated) to phosphorylase A.

The catalysed reaction is [(1-&gt;4)-alpha-D-glucosyl](n) + phosphate = [(1-&gt;4)-alpha-D-glucosyl](n-1) + alpha-D-glucose 1-phosphate. Allosterically regulated through the non-covalent binding of metabolites, being activated by AMP and inhibited by ATP, ADP, and glucose-6-phosphate. The activity is also controlled by post-translational modifications including phosphorylation. Its function is as follows. Allosteric enzyme that catalyzes the rate-limiting step in glycogen catabolism, the phosphorolytic cleavage of glycogen to produce glucose-1-phosphate, and plays a central role in maintaining cellular and organismal glucose homeostasis. The polypeptide is Glycogen phosphorylase, muscle form (Rattus norvegicus (Rat)).